A 502-amino-acid chain; its full sequence is N-fatty-acyl-amino acid synthase/hydrolase PM20D1 (502 aa).

The N-terminal stretch at 1-25 (MAQRCVCVLALVAMLLLVFPTVSRS) is a signal peptide. Residue histidine 125 participates in Zn(2+) binding. Aspartate 127 is an active-site residue. Position 157 (aspartate 157) interacts with Zn(2+). Catalysis depends on glutamate 191, which acts as the Proton acceptor. Residues glutamate 192 and aspartate 217 each coordinate Zn(2+). Asparagine 252 carries an N-linked (GlcNAc...) asparagine glycan. Residue histidine 464 participates in Zn(2+) binding.

This sequence belongs to the peptidase M20A family. The cofactor is Zn(2+).

The protein resides in the secreted. The catalysed reaction is an N-acyl-L-amino acid + H2O = an L-alpha-amino acid + a carboxylate. The enzyme catalyses an N-acyl-aromatic L-alpha-amino acid + H2O = an aromatic L-alpha-amino acid + a carboxylate. It catalyses the reaction L-phenylalanine + (9Z)-octadecenoate = N-(9Z-octadecenoyl)-L-phenylalanine + H2O. It carries out the reaction N-(9Z-octadecenoyl)-L-leucine + H2O = L-leucine + (9Z)-octadecenoate. The catalysed reaction is N-(5Z,8Z,11Z,14Z)-eicosatetraenoyl-glycine + H2O = (5Z,8Z,11Z,14Z)-eicosatetraenoate + glycine. The enzyme catalyses N-hexadecanoyl-L-phenylalanine + H2O = hexadecanoate + L-phenylalanine. It catalyses the reaction N-octadecanoyl-L-phenylalanine + H2O = octadecanoate + L-phenylalanine. It carries out the reaction N-(4Z,7Z,10Z,13Z,16Z,19Z-docosahexaenoyl)-L-phenylalanine + H2O = (4Z,7Z,10Z,13Z,16Z,19Z)-docosahexaenoate + L-phenylalanine. The catalysed reaction is N-(9Z-octadecenoyl)-L-asparagine + H2O = L-asparagine + (9Z)-octadecenoate. The enzyme catalyses (9Z)-octadecenoate + glycine = N-(9Z-octadecenoyl)glycine + H2O. It catalyses the reaction N-(9Z-octadecenoyl)-L-lysine + H2O = L-lysine + (9Z)-octadecenoate. It carries out the reaction N-(9Z-octadecenoyl)-L-methionine + H2O = (9Z)-octadecenoate + L-methionine. The catalysed reaction is N-(9Z-octadecenoyl)-L-serine + H2O = L-serine + (9Z)-octadecenoate. The enzyme catalyses N-(9Z-octadecenoyl)-L-tryptophan + H2O = L-tryptophan + (9Z)-octadecenoate. It catalyses the reaction N-(9Z-octadecenoyl)-L-tyrosine + H2O = L-tyrosine + (9Z)-octadecenoate. It carries out the reaction N-(9Z-octadecenoyl)-L-glutamine + H2O = L-glutamine + (9Z)-octadecenoate. The catalysed reaction is N-(5Z,8Z,11Z,14Z-eicosatetraenoyl)-L-serine + H2O = (5Z,8Z,11Z,14Z)-eicosatetraenoate + L-serine. The enzyme catalyses (5Z,8Z,11Z,14Z)-eicosatetraenoate + L-phenylalanine = N-(5Z,8Z,11Z,14Z-eicosatetraenoyl)-L-phenylalanine + H2O. It functions in the pathway amino-acid metabolism. It participates in energy metabolism. The protein operates within lipid metabolism; fatty acid metabolism. With respect to regulation, lipoproteins are powerful coactivators of PM20D1 activity in vitro and NAA biosynthesis in vivo. Functionally, secreted enzyme that regulates the endogenous N-fatty acyl amino acid (NAAs) tissue and circulating levels by functioning as a bidirectional NAA synthase/hydrolase. It condenses free fatty acids and free amino acids to generate NAAs and bidirectionally catalyzes the reverse hydrolysis reaction. Some of these NAAs stimulate oxidative metabolism via mitochondrial uncoupling, increasing energy expenditure in a UPC1-independent manner. Thereby, this secreted protein may indirectly regulate whole body energy expenditure. PM20D1 circulates in tight association with both low- and high-density (LDL and HDL,respectively) lipoprotein particles. This is N-fatty-acyl-amino acid synthase/hydrolase PM20D1 from Homo sapiens (Human).